Here is a 339-residue protein sequence, read N- to C-terminus: Casein kinase II subunit alpha' (339 aa).

Residues 50-334 (YEIINKIGRG…AKEAMDHKFF (285 aa)) enclose the Protein kinase domain. Residues 56-64 (IGRGKYSEV) and lysine 79 each bind ATP. Aspartate 167 serves as the catalytic Proton acceptor.

This sequence belongs to the protein kinase superfamily. Ser/Thr protein kinase family. CK2 subfamily. As to quaternary structure, tetramer composed of an alpha chain, an alpha', one beta chain and one beta' chain. Interacts with FACT subunits POB3 and SPT16. Interacts with NAP1. Interacts with YTA7.

It carries out the reaction L-seryl-[protein] + ATP = O-phospho-L-seryl-[protein] + ADP + H(+). The enzyme catalyses L-threonyl-[protein] + ATP = O-phospho-L-threonyl-[protein] + ADP + H(+). Functionally, catalytic subunit of a constitutively active serine/threonine-protein kinase complex that phosphorylates a large number of substrates containing acidic residues C-terminal to the phosphorylated serine or threonine. Phosphorylates YTA7 during S-phase to promote transcription of histones. The sequence is that of Casein kinase II subunit alpha' from Saccharomyces cerevisiae (strain ATCC 204508 / S288c) (Baker's yeast).